The chain runs to 167 residues: MKIHHLFQPHFRLIYLFIWGLIISGLSDLTWLIPLNVLAVSLFFISLQFSQKSFLPYLKRWFALVIFIVLMWATLSWKIGENGIELNFQGIELAEKLSLRTHLLLISLWLFLWNINDAVLVPSHWQIAFARKINSTFCADRTLHCTAWRIASKNGYCHARSWISSSA.

The next 4 membrane-spanning stretches (helical) occupy residues 13–33 (LIYL…TWLI), 37–57 (VLAV…FLPY), 61–81 (WFAL…KIGE), and 103–123 (LLLI…LVPS).

It is found in the cell membrane. This is an uncharacterized protein from Haemophilus influenzae (strain ATCC 51907 / DSM 11121 / KW20 / Rd).